A 120-amino-acid chain; its full sequence is uncharacterized protein (120 aa).

To M.jannaschii MJ1503.

This is an uncharacterized protein from Methanocaldococcus jannaschii (strain ATCC 43067 / DSM 2661 / JAL-1 / JCM 10045 / NBRC 100440) (Methanococcus jannaschii).